The sequence spans 252 residues: 4-hydroxy-tetrahydrodipicolinate reductase (252 aa).

8–13 (GALGRM) serves as a coordination point for NAD(+). Residue arginine 36 coordinates NADP(+). Residues 89–91 (GTT) and 114–117 (SSNF) each bind NAD(+). Catalysis depends on histidine 146, which acts as the Proton donor/acceptor. (S)-2,3,4,5-tetrahydrodipicolinate is bound at residue histidine 147. Lysine 150 serves as the catalytic Proton donor. 156–157 (GT) contributes to the (S)-2,3,4,5-tetrahydrodipicolinate binding site.

The protein belongs to the DapB family.

It localises to the cytoplasm. The catalysed reaction is (S)-2,3,4,5-tetrahydrodipicolinate + NAD(+) + H2O = (2S,4S)-4-hydroxy-2,3,4,5-tetrahydrodipicolinate + NADH + H(+). It catalyses the reaction (S)-2,3,4,5-tetrahydrodipicolinate + NADP(+) + H2O = (2S,4S)-4-hydroxy-2,3,4,5-tetrahydrodipicolinate + NADPH + H(+). It participates in amino-acid biosynthesis; L-lysine biosynthesis via DAP pathway; (S)-tetrahydrodipicolinate from L-aspartate: step 4/4. Its function is as follows. Catalyzes the conversion of 4-hydroxy-tetrahydrodipicolinate (HTPA) to tetrahydrodipicolinate. This is 4-hydroxy-tetrahydrodipicolinate reductase from Methanoculleus marisnigri (strain ATCC 35101 / DSM 1498 / JR1).